A 382-amino-acid polypeptide reads, in one-letter code: Galactokinase (382 aa).

34–37 (EHTD) provides a ligand contact to substrate. 124 to 130 (GAGLSSS) contributes to the ATP binding site. Positions 130 and 162 each coordinate Mg(2+). Residue Asp-174 is the Proton acceptor of the active site. Residue Tyr-223 participates in substrate binding.

The protein belongs to the GHMP kinase family. GalK subfamily.

The protein resides in the cytoplasm. The catalysed reaction is alpha-D-galactose + ATP = alpha-D-galactose 1-phosphate + ADP + H(+). It functions in the pathway carbohydrate metabolism; galactose metabolism. Functionally, catalyzes the transfer of the gamma-phosphate of ATP to D-galactose to form alpha-D-galactose-1-phosphate (Gal-1-P). This chain is Galactokinase, found in Salmonella heidelberg (strain SL476).